The sequence spans 660 residues: MATFKVLVLMILWITSIFNVRCEKFVTIPVNCSGEVDIDKMDVMCPNRYNLLSTNHLMEGEEVETFCRPSLRENDLLDGYLCRKQKWEVTCTETWYFVTDVKYQIIEVIPTENECMEERERKLKGEYIPPYYPPTNCVWNAIDTQERTFITLIEHPVIEDPVTMTLMDSKFTKPCNPKHNEVTICDTYNPLIKWISKETSGLNLHCQIKSWECIPVKLHHSHRNMMEALYLESPDFGIVDASKICNLTFCGYNGILLDNGEWWSIYRSGFTHGFLDNHILKNRRIEECKEKKPGYKLAKLDTTYIDLEFEIELEHEKCLGTLEKLQNGEYVTPLDLSYLSPSNPGKHYAYRLEYINTTEHKCVQLGFTYEGGDCRKMLDERDDHGAYYNWTTIKLQRVIRAVCYYHTFSMNLDESKHKYYDQDNRSIQIDEKFISEVLKSTPLIDRHEKYEGNLSWNGIIIESKNGHEKNVIVPSASQYNHVMINKILKRLDTVMYDSYKFDSESGSISYNKIVPIVREDNLQNAHRVDVIQYIKDKGSYIINGFTGWFSSLGKLMRWTIWGVGLFFSIFTLYKIIMILRKHSNDNVRKEFKETAGKVMIGQPIDTKSMSRTSIKANNKGKFDKVKDLFTPRSKTISHLTTDTLKEHTDGTYEELHFFNV.

An N-terminal signal peptide occupies residues 1 to 22; that stretch reads MATFKVLVLMILWITSIFNVRC. Over 23-558 the chain is Virion surface; sequence EKFVTIPVNC…FSSLGKLMRW (536 aa). Residues 559-579 form a helical membrane-spanning segment; that stretch reads TIWGVGLFFSIFTLYKIIMIL. Topologically, residues 580–660 are intravirion; that stretch reads RKHSNDNVRK…TYEELHFFNV (81 aa).

It belongs to the ephemerovirus glycoprotein family. Homotrimer. Interacts with matrix protein. In terms of processing, glycosylated by host. Glycosylation is crucial for glycoprotein export at the cell surface.

The protein localises to the virion membrane. In terms of biological role, attaches the virus to host cellular receptor, inducing endocytosis of the virion. In the endosome, the acidic pH induces conformational changes in the glycoprotein trimer, which trigger fusion between virus and cell membrane. The polypeptide is Glycoprotein (G) (Adelaide River virus (ARV)).